We begin with the raw amino-acid sequence, 210 residues long: Natriuretic peptide BM026 (210 aa).

Positions 1-26 are cleaved as a signal peptide; it reads MVGPSRLAGGGLLLLLLALLPVALDG. The tract at residues 83-99 is natriuretic peptide domain 1; it reads CFGHKIDRISHSSGMGC. The cysteines at positions 83 and 99 are disulfide-linked. Residues 122–134 are compositionally biased toward basic and acidic residues; that stretch reads ESKKSRAARDRMV. The segment at 122-210 is disordered; it reads ESKKSRAARD…QFNSKSSQVA (89 aa). The span at 140–150 shows a compositional bias: gly residues; it reads AGGGGGGGGGD. Residues 156–176 show a composition bias toward basic and acidic residues; it reads ELAKKDQHNNCFGRRIDRISH. Residues 166–182 are natriuretic peptide domain 2; sequence CFGRRIDRISHSTDLGC. Cysteines 166 and 182 form a disulfide. The segment covering 201–210 has biased composition (polar residues); that stretch reads QFNSKSSQVA.

Belongs to the natriuretic peptide family. As to expression, expressed by the venom gland.

It localises to the secreted. In terms of biological role, natriuretic peptide that dose-dependently induces the rapid relaxation of rat aortic strips phenylephrine-precontracted. Acts by stimulating cGMP production in a dose-dependent manner (by probably activating NPR1 and/or NPR2). May also show potent hypotensive effects. This Bungarus multicinctus (Many-banded krait) protein is Natriuretic peptide BM026.